The following is a 398-amino-acid chain: Glycosyltransferase GlyF (398 aa).

Positions 1 to 259 (MRKSIVLAAD…SEIAFQRSDL (259 aa)) are GT8 domain. Residues 8 to 13 (AADNAY) and 101 to 102 (DS) contribute to the UDP site. Mn(2+)-binding residues include D101, D103, and H221. 221-227 (HYASHDK) lines the UDP pocket.

In the N-terminal section; belongs to the glycosyltransferase 8 family.

In terms of biological role, may be involved in the polymorphic O-glycosylation of the serine-rich repeat protein PsrP. Has hydrolytic activity against UDP-galactose and to a lesser extent against UDP-glucose; no glycosyltransferase activity has been seen with tested substrates. This Streptococcus pneumoniae serotype 4 (strain ATCC BAA-334 / TIGR4) protein is Glycosyltransferase GlyF.